A 160-amino-acid chain; its full sequence is Deoxyuridine 5'-triphosphate nucleotidohydrolase (160 aa).

Substrate is bound by residues 79-81 (RSG), N92, 96-98 (TVD), and K106.

Belongs to the dUTPase family. It depends on Mg(2+) as a cofactor.

It carries out the reaction dUTP + H2O = dUMP + diphosphate + H(+). It functions in the pathway pyrimidine metabolism; dUMP biosynthesis; dUMP from dCTP (dUTP route): step 2/2. Its function is as follows. This enzyme is involved in nucleotide metabolism: it produces dUMP, the immediate precursor of thymidine nucleotides and it decreases the intracellular concentration of dUTP so that uracil cannot be incorporated into DNA. In Rhizobium meliloti (strain 1021) (Ensifer meliloti), this protein is Deoxyuridine 5'-triphosphate nucleotidohydrolase.